Consider the following 1616-residue polypeptide: DNA (cytosine-5)-methyltransferase 1 (1616 aa).

The tract at residues 1-120 (MPARTAPARV…NQARSEARRV (120 aa)) is interaction with DMAP1. The segment at 1-148 (MPARTAPARV…RRSKSDGEAK (148 aa)) is interaction with DNMT3A. 2 interaction with the PRC2/EED-EZH2 complex regions span residues 1 to 336 (MPAR…TEKK) and 308 to 606 (NPQI…TIRH). Residues 16 to 109 (PAISLPDDVR…NREVNGRLEN (94 aa)) form the DMAP1-binding domain. Lys70 is modified (N6,N6-dimethyllysine). Residues 103–349 (VNGRLENGNQ…AKTVMNSKTH (247 aa)) are disordered. Phosphoserine occurs at positions 127 and 133. Thr137 carries the phosphothreonine modification. Phosphoserine is present on Ser141. An N6-methyllysine; by SETD7 modification is found at Lys142. Phosphoserine; by PKB/AKT1 is present on Ser143. An interaction with DNMT3B region spans residues 149–217 (PEPSPSPRIT…TSRERVARPL (69 aa)). 2 positions are modified to phosphoserine: Ser152 and Ser154. Position 160 is an N6-acetyllysine (Lys160). The interaction with PCNA stretch occupies residues 163–174 (RQTTITSHFAKG). Thr166 carries the phosphothreonine modification. An N6-acetyllysine mark is found at Lys173 and Lys188. Positions 177 to 205 (KRKPQEESERAKSDESIKEEDKDQDEKRR) match the Nuclear localization signal motif. Composition is skewed to basic and acidic residues over residues 179-214 (KPQEESERAKSDESIKEEDKDQDEKRRRVTSRERVA), 221-267 (EPER…REAR), and 281-306 (KDEKKHRSQPKDLAAKRRPEEKEPEK). Lys259 is subject to N6-acetyllysine; alternate. Lys259 is covalently cross-linked (Glycyl lysine isopeptide (Lys-Gly) (interchain with G-Cter in SUMO2); alternate). The segment at 310–502 (QISDEKDEDE…PEYAPIFGLM (193 aa)) is homodimerization. Ser312 carries the post-translational modification Phosphoserine. Residues 321 to 337 (EEKRRKTTPKEPTEKKM) are compositionally biased toward basic and acidic residues. Residues 331–550 (EPTEKKMARA…NLNRFTEDSL (220 aa)) are DNA replication foci-targeting sequence. Zn(2+) contacts are provided by Cys353 and Cys356. Lys366 carries the N6-acetyllysine modification. Phosphoserine is present on residues Ser394 and Ser398. Zn(2+) contacts are provided by Cys414 and His418. Phosphoserine occurs at positions 509 and 549. A CXXC-type zinc finger spans residues 646-692 (NAFKRRRCGVCEVCQQPECGKCKACKDMVKFGGSGRSKQACQERRCP). A required for activity region spans residues 651–697 (RRCGVCEVCQQPECGKCKACKDMVKFGGSGRSKQACQERRCPNMAMK). Positions 653, 656, 659, 664, 667, 670, 686, and 691 each coordinate Zn(2+). The segment at 693–754 (NMAMKEADDD…SYYKKVCIDA (62 aa)) is autoinhibitory linker. Positions 699 to 709 (ADDDEEVDDNI) are enriched in acidic residues. The interval 699–729 (ADDDEEVDDNIPEMPSPKKMHQGKKKKQNKN) is disordered. Ser714 carries the post-translational modification Phosphoserine. The segment covering 716–728 (KKMHQGKKKKQNK) has biased composition (basic residues). Phosphoserine is present on Ser732. At Lys749 the chain carries N6-acetyllysine. One can recognise a BAH 1 domain in the interval 755–880 (ETLEVGDCVS…QDYARFESPP (126 aa)). Ser878 carries the post-translational modification Phosphoserine. An N6-acetyllysine mark is found at Lys891, Lys957, Lys961, Lys975, and Lys1054. The BAH 2 domain occupies 972–1100 (HYRKYSDYIK…AKSKSFEDPP (129 aa)). Positions 1095-1130 (SFEDPPNHARSPGNKGKGKGKGKGKPKSQACEPSEP) are disordered. Tandem repeats lie at residues 1109–1110 (KG), 1111–1112 (KG), 1113–1114 (KG), 1115–1116 (KG), and 1117–1118 (KG). Positions 1109–1120 (KGKGKGKGKGKP) are 6 X 2 AA tandem repeats of K-G. A compositionally biased stretch (basic residues) spans 1110-1120 (GKGKGKGKGKP). Residues Lys1111, Lys1113, and Lys1115 each carry the N6-acetyllysine modification. N6-acetyllysine; by EHMT2 is present on Lys1117. Residues Lys1119 and Lys1121 each carry the N6-acetyllysine modification. One copy of the 6; approximate repeat lies at 1119 to 1120 (KP). The tract at residues 1121 to 1616 (KSQACEPSEP…KIKEEEAAKD (496 aa)) is interaction with the PRC2/EED-EZH2 complex. The 461-residue stretch at 1139–1599 (LRTLDVFSGC…LEIKLCMLAK (461 aa)) folds into the SAM-dependent MTase C5-type domain. Residues 1139 to 1616 (LRTLDVFSGC…KIKEEEAAKD (478 aa)) are catalytic. S-adenosyl-L-methionine-binding positions include Ser1146, 1150-1151 (GL), 1168-1169 (EM), 1190-1191 (DC), and Cys1191. The active site involves Cys1226. N6-acetyllysine occurs at positions 1349 and 1415. S-adenosyl-L-methionine-binding residues include Asn1578 and Val1580. Lys1609 is covalently cross-linked (Glycyl lysine isopeptide (Lys-Gly) (interchain with G-Cter in SUMO2)).

This sequence belongs to the class I-like SAM-binding methyltransferase superfamily. C5-methyltransferase family. In terms of assembly, homodimer. Forms a stable complex with E2F1, BB1 and HDAC1. Forms a complex with DMAP1 and HDAC2, with direct interaction. Interacts with the PRC2/EED-EZH2 complex. Probably part of a corepressor complex containing ZNF304, TRIM28, SETDB1 and DNMT1. Interacts with UHRF1; promoting its recruitment to hemimethylated DNA. Interacts with USP7, promoting its deubiquitination. Interacts with PCNA. Interacts with MBD2 and MBD3. Interacts with DNMT3A and DNMT3B. Interacts with UBC9. Interacts with CSNK1D. Interacts with HDAC1. Interacts with BAZ2A/TIP5. Interacts with SIRT7. Interacts with ZNF263; recruited to the SIX3 promoter along with other proteins involved in chromatin modification and transcriptional corepression where it contributes to transcriptional repression. Interacts with L3MBTL3 and DCAF5; the interaction requires DNMT1 methylation at Lys-142 and is necessary to target DNMT1 for ubiquitination by the CRL4-DCAF5 E3 ubiquitin ligase complex and proteasomal degradation. Interacts with PHF20L1; the interaction requires DNMT1 methylation at Lys-142 and protects DNMT1 from ubiquitination and proteasomal degradation. Post-translationally, sumoylated; sumoylation increases activity. In terms of processing, acetylation on multiple lysines, mainly by KAT2B/PCAF, regulates cell cycle G(2)/M transition. Deacetylation of Lys-1349 and Lys-1415 by SIRT1 increases methyltransferase activity. Phosphorylation of Ser-154 by CDKs is important for enzymatic activity and protein stability. Phosphorylation of Ser-143 by AKT1 prevents methylation by SETD7 thereby increasing DNMT1 stability. Post-translationally, methylation at Lys-142 by SETD7 is necessary for the regulation of DNMT1 proteasomal degradation. In terms of processing, ubiquitinated by UHRF1; interaction with USP7 counteracts ubiquitination by UHRF1 by promoting deubiquitination and preventing degradation by the proteasome. In terms of tissue distribution, ubiquitous; highly expressed in fetal tissues, heart, kidney, placenta, peripheral blood mononuclear cells, and expressed at lower levels in spleen, lung, brain, small intestine, colon, liver, and skeletal muscle. Isoform 2 is less expressed than isoform 1.

The protein localises to the nucleus. It catalyses the reaction a 2'-deoxycytidine in DNA + S-adenosyl-L-methionine = a 5-methyl-2'-deoxycytidine in DNA + S-adenosyl-L-homocysteine + H(+). Its function is as follows. Methylates CpG residues. Preferentially methylates hemimethylated DNA. Associates with DNA replication sites in S phase maintaining the methylation pattern in the newly synthesized strand, that is essential for epigenetic inheritance. Associates with chromatin during G2 and M phases to maintain DNA methylation independently of replication. It is responsible for maintaining methylation patterns established in development. DNA methylation is coordinated with methylation of histones. Mediates transcriptional repression by direct binding to HDAC2. In association with DNMT3B and via the recruitment of CTCFL/BORIS, involved in activation of BAG1 gene expression by modulating dimethylation of promoter histone H3 at H3K4 and H3K9. Probably forms a corepressor complex required for activated KRAS-mediated promoter hypermethylation and transcriptional silencing of tumor suppressor genes (TSGs) or other tumor-related genes in colorectal cancer (CRC) cells. Also required to maintain a transcriptionally repressive state of genes in undifferentiated embryonic stem cells (ESCs). Associates at promoter regions of tumor suppressor genes (TSGs) leading to their gene silencing. Promotes tumor growth. The chain is DNA (cytosine-5)-methyltransferase 1 (DNMT1) from Homo sapiens (Human).